The following is a 320-amino-acid chain: Cytochrome c biogenesis protein CcsA (320 aa).

8 helical membrane-spanning segments follow: residues 15–35 (FSIVSIVITIHLITLLVDEII), 43–63 (KGMIAIFLCITGLLVTRWIYS), 71–91 (LYESLIFLSWSLSVIHIVPYF), 98–118 (LSTITASSVIFTQGFATSGLL), 143–163 (MILSYAALLCGSLLSVALLVI), 224–244 (VISLGFIFLTIGILSGAVWAN), 251–271 (WNWDPKETWAFITWIVFAIYL), and 285–305 (AIVASIGFLIIWICYFGVNLL).

This sequence belongs to the CcmF/CycK/Ccl1/NrfE/CcsA family. As to quaternary structure, may interact with Ccs1.

It localises to the plastid. The protein localises to the chloroplast thylakoid membrane. Required during biogenesis of c-type cytochromes (cytochrome c6 and cytochrome f) at the step of heme attachment. The protein is Cytochrome c biogenesis protein CcsA of Panax ginseng (Korean ginseng).